The chain runs to 399 residues: Tryptophan synthase beta chain (399 aa).

The residue at position 92 (lysine 92) is an N6-(pyridoxal phosphate)lysine.

This sequence belongs to the TrpB family. In terms of assembly, tetramer of two alpha and two beta chains. It depends on pyridoxal 5'-phosphate as a cofactor.

The enzyme catalyses (1S,2R)-1-C-(indol-3-yl)glycerol 3-phosphate + L-serine = D-glyceraldehyde 3-phosphate + L-tryptophan + H2O. Its pathway is amino-acid biosynthesis; L-tryptophan biosynthesis; L-tryptophan from chorismate: step 5/5. Functionally, the beta subunit is responsible for the synthesis of L-tryptophan from indole and L-serine. In Legionella pneumophila (strain Paris), this protein is Tryptophan synthase beta chain.